The sequence spans 137 residues: uncharacterized protein (137 aa).

It belongs to the ycf72 family.

Its subcellular location is the plastid. It is found in the chloroplast. This is an uncharacterized protein from Saccharum hybrid (Sugarcane).